Here is a 224-residue protein sequence, read N- to C-terminus: DNA mismatch repair protein MutH (224 aa).

Belongs to the MutH family.

Its subcellular location is the cytoplasm. Its function is as follows. Sequence-specific endonuclease that cleaves unmethylated GATC sequences. It is involved in DNA mismatch repair. This chain is DNA mismatch repair protein MutH, found in Histophilus somni (strain 2336) (Haemophilus somnus).